Consider the following 315-residue polypeptide: ADP/ATP translocase (315 aa).

The Mitochondrial intermembrane segment spans residues 1–13 (MSNKQETKILGMP). Solcar repeat units lie at residues 13–106 (PPFV…FKAM) and 118–210 (KWMA…IKPV). The helical transmembrane segment at 14–37 (PFVVDFLMGGVSAAVSKTAAAPIE) threads the bilayer. K30 contacts bongkrekate. Residues 38–80 (RIKLLVQNQDEMIKAGRLDRRYNGIIDCFRRTTADEGLMALWR) lie on the Mitochondrial matrix side of the membrane. Residues I62 and 81–83 (GNT) contribute to the a cardiolipin site. The chain crosses the membrane as a helical span at residues 81–104 (GNTANVIRYFPTQALNFAFRDKFK). R88 lines the ADP pocket. Bongkrekate contacts are provided by residues 88 to 89 (RY) and N96. Over 105 to 115 (AMFGYKKDKDG) the chain is Mitochondrial intermembrane. Residues 116 to 145 (YAKWMAGNLASGGAAGATSLLFVYSLDYAR) traverse the membrane as a helical segment. The Mitochondrial matrix segment spans residues 146–184 (TRLANDAKSAKGGGARQFNGLIDVYRKTLASDGIAGLYR). Residues L166 and 184 to 185 (RG) each bind a cardiolipin. A helical transmembrane segment spans residues 185–213 (GFGPSVAGIVVYRGLYFGMYDSIKPVVLV). Position 196–197 (196–197 (YR)) interacts with bongkrekate. The Mitochondrial intermembrane segment spans residues 214–216 (GPL). The chain crosses the membrane as a helical span at residues 217–242 (ANNFLASFLLGWCVTTGAGIASYPLD). Residues 218-304 (NNFLASFLLG…LSIYDQLQIL (87 aa)) form a Solcar repeat. The Mitochondrial matrix portion of the chain corresponds to 243 to 283 (TVRRRMMMTSGEAVKYKSSIDAFRQIIAKEGVKSLFKGAGA). Residue R245 participates in ADP binding. A Nucleotide carrier signature motif motif is present at residues 245 to 250 (RRRMMM). A cardiolipin is bound by residues 260-261 (SS) and 280-282 (GAG). A helical membrane pass occupies residues 284–304 (NILRGVAGAGVLSIYDQLQIL). At 305 to 315 (LFGKAFKGGSG) the chain is on the mitochondrial intermembrane side.

It belongs to the mitochondrial carrier (TC 2.A.29) family. In terms of assembly, monomer.

The protein resides in the mitochondrion inner membrane. The catalysed reaction is ADP(in) + ATP(out) = ADP(out) + ATP(in). With respect to regulation, the matrix-open state (m-state) is inhibited by the membrane-permeable bongkrekic acid (BKA). The cytoplasmic-open state (c-state) is inhibited by the membrane-impermeable toxic inhibitor carboxyatractyloside (CATR). Functionally, ADP:ATP antiporter that mediates import of ADP into the mitochondrial matrix for ATP synthesis, and export of ATP out to fuel the cell. Cycles between the cytoplasmic-open state (c-state) and the matrix-open state (m-state): operates by the alternating access mechanism with a single substrate-binding site intermittently exposed to either the cytosolic (c-state) or matrix (m-state) side of the inner mitochondrial membrane. The protein is ADP/ATP translocase of Thermothelomyces thermophilus (strain ATCC 42464 / BCRC 31852 / DSM 1799) (Sporotrichum thermophile).